The primary structure comprises 96 residues: Co-chaperonin GroES (96 aa).

The protein belongs to the GroES chaperonin family. In terms of assembly, heptamer of 7 subunits arranged in a ring. Interacts with the chaperonin GroEL.

It localises to the cytoplasm. Together with the chaperonin GroEL, plays an essential role in assisting protein folding. The GroEL-GroES system forms a nano-cage that allows encapsulation of the non-native substrate proteins and provides a physical environment optimized to promote and accelerate protein folding. GroES binds to the apical surface of the GroEL ring, thereby capping the opening of the GroEL channel. This Hydrogenobaculum sp. (strain Y04AAS1) protein is Co-chaperonin GroES.